A 249-amino-acid chain; its full sequence is Tryptophan synthase alpha chain (249 aa).

Catalysis depends on proton acceptor residues Glu43 and Asp54.

The protein belongs to the TrpA family. As to quaternary structure, tetramer of two alpha and two beta chains.

The catalysed reaction is (1S,2R)-1-C-(indol-3-yl)glycerol 3-phosphate + L-serine = D-glyceraldehyde 3-phosphate + L-tryptophan + H2O. Its pathway is amino-acid biosynthesis; L-tryptophan biosynthesis; L-tryptophan from chorismate: step 5/5. Its function is as follows. The alpha subunit is responsible for the aldol cleavage of indoleglycerol phosphate to indole and glyceraldehyde 3-phosphate. The polypeptide is Tryptophan synthase alpha chain (Campylobacter jejuni subsp. jejuni serotype O:6 (strain 81116 / NCTC 11828)).